The primary structure comprises 630 residues: MEAKETHSISDHEVELQDAKPEEKSENGNFVFEKAFSSDEEKGSGYNTNETYSKMDNSLQHRGVSKIEAVRDSIYQNKRGMYLAYAFGIAILACSWASAIQSSTTYSYQVYATASFNRTSMISTLEIATAIISSVCKPILGKFSDITSRPMTYTLVLLFYVIGFIVVASSSTISAYVIGSVFISIGSSGLDYLNTLVVGDLTSLKWRGFMTALLSTPYIATVWFTGFIVQGIIDSNWRWGYGMFAIIMPAVMTPAVIILMYLERQANKDENIKKIINYQTEEKNKNKQSKWQKLWKAVLEVDLFGLILLGVGWSILLLPFSLTSYAKNGWKNPSMIAMMVVGGVILIAYSGYEMFIAPYPSCPRRVMNRTFITAVIIDFFYYLAGYLQSMYFTTYTWILYDWSYRDWTYFNNTMTIALCVFGVFAGAMHRVFHRYKYLQIIGLVIKIVGYGILIRPNFAATGKVDLAWSLILIGMGGSFSVVGSQVSCQASVPHQDLAIASSLLPLYTNIGGAIGAAIASPIFSNKVPKYLREYLPSSINDTQVYNFYSDSSLIREYPVGTEIRDGAIKAYSRSMFFLLVPAVSLSFIPLAAAFWQSNFYLGNQQNAVEGDQDHKKKGDKETTQEEKIII.

The segment covering 1–26 (MEAKETHSISDHEVELQDAKPEEKSE) has biased composition (basic and acidic residues). Residues 1 to 51 (MEAKETHSISDHEVELQDAKPEEKSENGNFVFEKAFSSDEEKGSGYNTNET) are disordered. Residues 1–79 (MEAKETHSIS…VRDSIYQNKR (79 aa)) lie on the Cytoplasmic side of the membrane. Phosphoserine occurs at positions 10 and 38. The chain crosses the membrane as a helical span at residues 80-100 (GMYLAYAFGIAILACSWASAI). At 101-120 (QSSTTYSYQVYATASFNRTS) the chain is on the extracellular side. The chain crosses the membrane as a helical span at residues 121–141 (MISTLEIATAIISSVCKPILG). Over 142 to 154 (KFSDITSRPMTYT) the chain is Cytoplasmic. The helical transmembrane segment at 155–175 (LVLLFYVIGFIVVASSSTISA) threads the bilayer. Residue Tyr176 is a topological domain, extracellular. A helical membrane pass occupies residues 177–197 (VIGSVFISIGSSGLDYLNTLV). Topologically, residues 198–208 (VGDLTSLKWRG) are cytoplasmic. A helical membrane pass occupies residues 209–229 (FMTALLSTPYIATVWFTGFIV). The Extracellular portion of the chain corresponds to 230–241 (QGIIDSNWRWGY). Residues 242–262 (GMFAIIMPAVMTPAVIILMYL) traverse the membrane as a helical segment. Topologically, residues 263-302 (ERQANKDENIKKIINYQTEEKNKNKQSKWQKLWKAVLEVD) are cytoplasmic. A helical transmembrane segment spans residues 303–323 (LFGLILLGVGWSILLLPFSLT). At 324-335 (SYAKNGWKNPSM) the chain is on the extracellular side. The helical transmembrane segment at 336–356 (IAMMVVGGVILIAYSGYEMFI) threads the bilayer. Residues 357 to 370 (APYPSCPRRVMNRT) lie on the Cytoplasmic side of the membrane. Residues 371–391 (FITAVIIDFFYYLAGYLQSMY) form a helical membrane-spanning segment. The Extracellular segment spans residues 392-406 (FTTYTWILYDWSYRD). A helical membrane pass occupies residues 407-427 (WTYFNNTMTIALCVFGVFAGA). The Cytoplasmic segment spans residues 428 to 439 (MHRVFHRYKYLQ). A helical transmembrane segment spans residues 440 to 460 (IIGLVIKIVGYGILIRPNFAA). Residues 461–465 (TGKVD) lie on the Extracellular side of the membrane. Residues 466–486 (LAWSLILIGMGGSFSVVGSQV) traverse the membrane as a helical segment. At 487–502 (SCQASVPHQDLAIASS) the chain is on the cytoplasmic side. The helical transmembrane segment at 503–523 (LLPLYTNIGGAIGAAIASPIF) threads the bilayer. Residues 522 to 576 (IFSNKVPKYLREYLPSSINDTQVYNFYSDSSLIREYPVGTEIRDGAIKAYSRSMF) are heme binding. The Extracellular portion of the chain corresponds to 524 to 574 (SNKVPKYLREYLPSSINDTQVYNFYSDSSLIREYPVGTEIRDGAIKAYSRS). A helical transmembrane segment spans residues 575–595 (MFFLLVPAVSLSFIPLAAAFW). The Cytoplasmic segment spans residues 596-630 (QSNFYLGNQQNAVEGDQDHKKKGDKETTQEEKIII). Positions 610 to 630 (GDQDHKKKGDKETTQEEKIII) are disordered. Basic and acidic residues predominate over residues 611-630 (DQDHKKKGDKETTQEEKIII).

Belongs to the major facilitator superfamily.

The protein resides in the cell membrane. Functionally, low affinity heme transporter involved in the assimilation of exogenous heme during conditions of low cellular iron. This is Low affinity heme transporter str3 from Schizosaccharomyces pombe (strain 972 / ATCC 24843) (Fission yeast).